Reading from the N-terminus, the 513-residue chain is Probable DNA primase large subunit (513 aa).

4 residues coordinate [4Fe-4S] cluster: C315, C398, C415, and C457.

This sequence belongs to the eukaryotic-type primase large subunit family. In terms of assembly, heterodimer of a small subunit and a large subunit. [4Fe-4S] cluster is required as a cofactor.

In terms of biological role, DNA primase is the polymerase that synthesizes small RNA primers for the Okazaki fragments made during discontinuous DNA replication. The protein is Probable DNA primase large subunit of Neurospora crassa (strain ATCC 24698 / 74-OR23-1A / CBS 708.71 / DSM 1257 / FGSC 987).